Here is a 353-residue protein sequence, read N- to C-terminus: Variable large protein 12 (353 aa).

A signal peptide spans 1 to 18 (MRKRISAIIMTLFMVLAS). C19 carries the N-palmitoyl cysteine lipid modification. A lipid anchor (S-diacylglycerol cysteine) is attached at C19.

This sequence belongs to the variable large protein (Vlp) family. Beta subfamily.

It is found in the cell outer membrane. Functionally, the Vlp and Vsp proteins are antigenically distinct proteins, only one vlp or vsp gene is transcriptionally active at any one time. Switching between these genes is a mechanism of host immune response evasion. This chain is Variable large protein 12, found in Borrelia hermsii.